The primary structure comprises 141 residues: Hemoglobin subunit alpha-A (141 aa).

The region spanning 1–141 is the Globin domain; it reads VLSASDKTNV…VAKELTAKYR (141 aa). Residue His58 participates in O2 binding. His87 serves as a coordination point for heme b.

The protein belongs to the globin family. As to quaternary structure, heterotetramer of two alpha chains and two beta chains. In terms of tissue distribution, red blood cells.

Its function is as follows. Involved in oxygen transport from the lung to the various peripheral tissues. The sequence is that of Hemoglobin subunit alpha-A (HBAA) from Phalacrocorax carbo (Great cormorant).